The following is a 202-amino-acid chain: Putative 3-methyladenine DNA glycosylase (202 aa).

It belongs to the DNA glycosylase MPG family.

This Clostridium botulinum (strain Alaska E43 / Type E3) protein is Putative 3-methyladenine DNA glycosylase.